We begin with the raw amino-acid sequence, 208 residues long: dITP/XTP pyrophosphatase (208 aa).

Residue 16–21 (SNNKGK) coordinates substrate. Catalysis depends on D79, which acts as the Proton acceptor. D79 provides a ligand contact to Mg(2+). Substrate is bound by residues S80, 166–169 (FGYD), K189, and 194–195 (HR).

This sequence belongs to the HAM1 NTPase family. In terms of assembly, homodimer. It depends on Mg(2+) as a cofactor.

The catalysed reaction is XTP + H2O = XMP + diphosphate + H(+). It carries out the reaction dITP + H2O = dIMP + diphosphate + H(+). It catalyses the reaction ITP + H2O = IMP + diphosphate + H(+). Functionally, pyrophosphatase that catalyzes the hydrolysis of nucleoside triphosphates to their monophosphate derivatives, with a high preference for the non-canonical purine nucleotides XTP (xanthosine triphosphate), dITP (deoxyinosine triphosphate) and ITP. Seems to function as a house-cleaning enzyme that removes non-canonical purine nucleotides from the nucleotide pool, thus preventing their incorporation into DNA/RNA and avoiding chromosomal lesions. The protein is dITP/XTP pyrophosphatase of Acinetobacter baumannii (strain ACICU).